The primary structure comprises 163 residues: MAVAVCHFRLGPEVWNTASMEMPKVKQDMPPPGGYGPIDYKRNLPRRGLSGYSMLAIGIGTLVYGHWSIMKWNRERRRLQIEDFEARIALMPLFQAETDRRTLQMLRENLEEEAIIMKDVPDWKVGESVFHTTRWVPPLIGELYGLRTTEETIHANYGFMWYT.

Residues 48–70 (GLSGYSMLAIGIGTLVYGHWSIM) form a helical membrane-spanning segment.

Belongs to the complex I NDUFA13 subunit family. Complex I is composed of 45 different subunits. Interacts with CARD15, but not with CARD4. Interacts with STAT3, but not with STAT1, STAT2 and STAT5A. Interacts with OLFM4.

It localises to the mitochondrion inner membrane. It is found in the nucleus. Its function is as follows. Accessory subunit of the mitochondrial membrane respiratory chain NADH dehydrogenase (Complex I), that is believed not to be involved in catalysis. Complex I functions in the transfer of electrons from NADH to the respiratory chain. The immediate electron acceptor for the enzyme is believed to be ubiquinone. Involved in the interferon/all-trans-retinoic acid (IFN/RA) induced cell death. This apoptotic activity is inhibited by interaction with viral IRF1. Prevents the transactivation of STAT3 target genes. May play a role in CARD15-mediated innate mucosal responses and serve to regulate intestinal epithelial cell responses to microbes. The chain is NADH dehydrogenase [ubiquinone] 1 alpha subcomplex subunit 13 (NDUFA13) from Macaca fascicularis (Crab-eating macaque).